The sequence spans 20 residues: FLSLALAALPKFLCLVFKKC.

Cys14 and Cys20 are joined by a disulfide.

As to expression, expressed by the skin glands.

The protein resides in the secreted. Its function is as follows. Antimicrobial peptide. Has low activity against the Gram-positive bacterium S.aureus and the Gram-negative bacterium E.coli (MIC&lt;15 uM). Has a strong hemolytic activity. The protein is Brevinin-1DYa of Rana dybowskii (Dybovsky's frog).